Here is a 209-residue protein sequence, read N- to C-terminus: Large ribosomal subunit protein uL3 (209 aa).

This sequence belongs to the universal ribosomal protein uL3 family. As to quaternary structure, part of the 50S ribosomal subunit. Forms a cluster with proteins L14 and L19.

In terms of biological role, one of the primary rRNA binding proteins, it binds directly near the 3'-end of the 23S rRNA, where it nucleates assembly of the 50S subunit. This Nitratidesulfovibrio vulgaris (strain ATCC 29579 / DSM 644 / CCUG 34227 / NCIMB 8303 / VKM B-1760 / Hildenborough) (Desulfovibrio vulgaris) protein is Large ribosomal subunit protein uL3.